The sequence spans 236 residues: Segregation and condensation protein A (236 aa).

This sequence belongs to the ScpA family. As to quaternary structure, component of a cohesin-like complex composed of ScpA, ScpB and the Smc homodimer, in which ScpA and ScpB bind to the head domain of Smc. The presence of the three proteins is required for the association of the complex with DNA.

It is found in the cytoplasm. Functionally, participates in chromosomal partition during cell division. May act via the formation of a condensin-like complex containing Smc and ScpB that pull DNA away from mid-cell into both cell halves. This Streptococcus sanguinis (strain SK36) protein is Segregation and condensation protein A.